We begin with the raw amino-acid sequence, 104 residues long: Snakin-2 (104 aa).

An N-terminal signal peptide occupies residues Met1–Ser23. Positions Ile24–Ala38 are cleaved as a propeptide — removed in mature form.

Belongs to the GASA family. In terms of processing, six disulfide bonds may be present. As to expression, expressed in tubers, stems, flowers, shoot apex and leaves, but not in roots or stolons.

It localises to the secreted. The protein resides in the cell wall. Functionally, has an antimicrobial activity. Causes a rapid aggregation of both Gram-positive and Gram-negative bacteria, but the antimicrobial activity is not correlated with the capacity to aggregate bacteria. The chain is Snakin-2 (SN2) from Solanum tuberosum (Potato).